The primary structure comprises 327 residues: uncharacterized protein (327 aa).

Over 1 to 19 (MSIAQDRGIVFKLLSIYRA) the chain is Cytoplasmic. A helical membrane pass occupies residues 20 to 40 (AAGIFMALAQLIVIFFGYCDF). Residues 41 to 51 (KIKGYRIASYN) lie on the Extracellular side of the membrane. Residues 52–72 (APTFASSFIILAVCLLLVVVL) traverse the membrane as a helical segment. Over 73–104 (ENPEVKVTNSENSLFSALKQFFRVERKKLISC) the chain is Cytoplasmic. The helical transmembrane segment at 105 to 125 (LILLWSMFLSSFIMSEVVYFM) threads the bilayer. Residues 126–141 (PLFLTLHVNWDTKFQG) lie on the Extracellular side of the membrane. A helical transmembrane segment spans residues 142–162 (IAFMVASILGVTGSYFAPKLI). Residues 163–199 (NVGCSCGRAKDGGLEESDTTGSETVEVKKKDSLYSGQ) lie on the Cytoplasmic side of the membrane. A helical transmembrane segment spans residues 200-220 (VFLSIFALFVSLLGQAFMIGA). The Extracellular portion of the chain corresponds to 221–235 (SEALKHKSMPPTNSG). The helical transmembrane segment at 236-256 (IFFSAGMSITLLGYNFLASSI) threads the bilayer. Residues 257–275 (PALFSMYIDPKLKVQLMPS) are Cytoplasmic-facing. The helical transmembrane segment at 276 to 296 (IGAISGIGKLVAPIVLAALYG) threads the bilayer. Over 297 to 300 (TRLG) the chain is Extracellular. The chain crosses the membrane as a helical span at residues 301–321 (LSIAVGFGMILVAVSIPPLIW). Topologically, residues 322–327 (LRKKRC) are cytoplasmic.

Its subcellular location is the membrane. This is an uncharacterized protein from Saccharomyces cerevisiae (strain ATCC 204508 / S288c) (Baker's yeast).